Reading from the N-terminus, the 252-residue chain is Ribosomal RNA small subunit methyltransferase J (252 aa).

Residues 101–102, 117–118, 153–154, and Asp171 each bind S-adenosyl-L-methionine; these read RD, ER, and SS.

The protein belongs to the methyltransferase superfamily. RsmJ family.

The protein resides in the cytoplasm. The catalysed reaction is guanosine(1516) in 16S rRNA + S-adenosyl-L-methionine = N(2)-methylguanosine(1516) in 16S rRNA + S-adenosyl-L-homocysteine + H(+). In terms of biological role, specifically methylates the guanosine in position 1516 of 16S rRNA. The chain is Ribosomal RNA small subunit methyltransferase J from Salmonella choleraesuis (strain SC-B67).